Consider the following 257-residue polypeptide: DNA-binding and peroxide stress resistance protein YaaA (257 aa).

Positions 35–66 (IGIARKLSAPQIGKLMSISDKLADLNATRFHD) match the Helix-hairpin-helix motif.

Belongs to the UPF0246 family.

Its subcellular location is the cytoplasm. In terms of biological role, protects bacteria from neutrophil-related defense upon infection of mammals. Binds DNA. This Klebsiella pneumoniae subsp. pneumoniae (strain HS11286) protein is DNA-binding and peroxide stress resistance protein YaaA.